We begin with the raw amino-acid sequence, 185 residues long: Peptidoglycan-recognition protein SC1a/b (185 aa).

An N-terminal signal peptide occupies residues 1 to 21; it reads MVSKVALLLAVLVCSQYMAQG. An N-acetylmuramoyl-L-alanine amidase domain is found at 46–170; the sequence is SYAIIHHTAG…RQVSATECPG (125 aa). H51 contacts Zn(2+). The cysteines at positions 58 and 64 are disulfide-linked. H160 and C168 together coordinate Zn(2+).

The protein belongs to the N-acetylmuramoyl-L-alanine amidase 2 family. It depends on Zn(2+) as a cofactor.

It is found in the secreted. It catalyses the reaction Hydrolyzes the link between N-acetylmuramoyl residues and L-amino acid residues in certain cell-wall glycopeptides.. N-acetylmuramyl-L-alanine amidase involved in innate immunity by degrading bacterial peptidoglycans (PGN). Plays a scavenger role by digesting biologically active PGN into biologically inactive fragments. Has no direct bacteriolytic activity. The polypeptide is Peptidoglycan-recognition protein SC1a/b (PGRP-SC1a) (Drosophila simulans (Fruit fly)).